Here is a 210-residue protein sequence, read N- to C-terminus: High frequency lysogenization protein HflD homolog (210 aa).

The stretch at 103–130 (EAKAKLAERLQQIERQLPLYENDIMADQ) forms a coiled coil.

Belongs to the HflD family.

It is found in the cytoplasm. It localises to the cell inner membrane. The sequence is that of High frequency lysogenization protein HflD homolog from Actinobacillus pleuropneumoniae serotype 3 (strain JL03).